The chain runs to 75 residues: Putative membrane protein insertion efficiency factor (75 aa).

It belongs to the UPF0161 family.

Its subcellular location is the cell membrane. Its function is as follows. Could be involved in insertion of integral membrane proteins into the membrane. In Bacillus velezensis (strain DSM 23117 / BGSC 10A6 / LMG 26770 / FZB42) (Bacillus amyloliquefaciens subsp. plantarum), this protein is Putative membrane protein insertion efficiency factor.